Here is a 164-residue protein sequence, read N- to C-terminus: Endoribonuclease YbeY (164 aa).

Zn(2+)-binding residues include H117, H121, and H127.

It belongs to the endoribonuclease YbeY family. It depends on Zn(2+) as a cofactor.

It localises to the cytoplasm. Functionally, single strand-specific metallo-endoribonuclease involved in late-stage 70S ribosome quality control and in maturation of the 3' terminus of the 16S rRNA. The protein is Endoribonuclease YbeY of Mycoplasma capricolum subsp. capricolum (strain California kid / ATCC 27343 / NCTC 10154).